The chain runs to 326 residues: Delta-aminolevulinic acid dehydratase (326 aa).

3 residues coordinate Zn(2+): C119, C121, and C129. Residue K198 is the Schiff-base intermediate with substrate of the active site. Positions 208 and 220 each coordinate 5-aminolevulinate. Residue E236 participates in Mg(2+) binding. K251 functions as the Schiff-base intermediate with substrate in the catalytic mechanism. S277 and Y316 together coordinate 5-aminolevulinate.

Belongs to the ALAD family. In terms of assembly, homooctamer. Zn(2+) serves as cofactor.

The catalysed reaction is 2 5-aminolevulinate = porphobilinogen + 2 H2O + H(+). Its pathway is porphyrin-containing compound metabolism; protoporphyrin-IX biosynthesis; coproporphyrinogen-III from 5-aminolevulinate: step 1/4. Functionally, catalyzes an early step in the biosynthesis of tetrapyrroles. Binds two molecules of 5-aminolevulinate per subunit, each at a distinct site, and catalyzes their condensation to form porphobilinogen. In Synechococcus elongatus (strain ATCC 33912 / PCC 7942 / FACHB-805) (Anacystis nidulans R2), this protein is Delta-aminolevulinic acid dehydratase (hemB).